A 57-amino-acid chain; its full sequence is COP9 signalosome complex subunit 9 (57 aa).

Belongs to the CSN9 family. In terms of assembly, component of the CSN complex, probably composed of cops1, cops2, cops3, cops4, cops5, cops6, cops7, cops8 and cops9.

It localises to the nucleus. The protein localises to the cytoplasm. Its subcellular location is the nucleoplasm. Component of the COP9 signalosome complex (CSN), a complex involved in various cellular and developmental processes. The CSN complex is an essential regulator of the ubiquitin (Ubl) conjugation pathway by mediating the deneddylation of the cullin subunits of SCF-type E3 ligase complexes, leading to decrease the Ubl ligase activity. May play a role in cell proliferation. In Danio rerio (Zebrafish), this protein is COP9 signalosome complex subunit 9.